Here is a 142-residue protein sequence, read N- to C-terminus: Large ribosomal subunit protein uL11 (142 aa).

This sequence belongs to the universal ribosomal protein uL11 family. In terms of assembly, part of the ribosomal stalk of the 50S ribosomal subunit. Interacts with L10 and the large rRNA to form the base of the stalk. L10 forms an elongated spine to which L12 dimers bind in a sequential fashion forming a multimeric L10(L12)X complex. Post-translationally, one or more lysine residues are methylated.

Functionally, forms part of the ribosomal stalk which helps the ribosome interact with GTP-bound translation factors. The protein is Large ribosomal subunit protein uL11 of Rhizobium meliloti (strain 1021) (Ensifer meliloti).